The sequence spans 212 residues: Riboflavin kinase (212 aa).

An H-T-H motif-like region spans residues 1–87 (MKKSNLDLLI…HEELSDALYR (87 aa)). Residues 88 to 212 (GIIIGEVVSG…DGDRIRIKTL (125 aa)) are riboflavin kinase. A CDP-binding site is contributed by 97–102 (GIGEGA). The Mg(2+) site is built by Thr124 and Asn126. 2 residues coordinate FMN: Thr180 and Glu188. 193–196 (VNLR) serves as a coordination point for CDP.

This sequence belongs to the archaeal riboflavin kinase family. The cofactor is Mg(2+).

The enzyme catalyses riboflavin + CTP = CDP + FMN + H(+). Its pathway is cofactor biosynthesis; FMN biosynthesis; FMN from riboflavin (CTP route): step 1/1. Catalyzes the CTP-dependent phosphorylation of riboflavin (vitamin B2) to form flavin mononucleotide (FMN). In Pyrococcus furiosus (strain ATCC 43587 / DSM 3638 / JCM 8422 / Vc1), this protein is Riboflavin kinase (ribK).